The following is a 256-amino-acid chain: Acetyl-coenzyme A carboxylase carboxyl transferase subunit alpha (256 aa).

The region spanning 1–236 is the CoA carboxyltransferase C-terminal domain; that stretch reads MTDVARILKE…RSHLIDEITQ (236 aa).

The protein belongs to the AccA family. In terms of assembly, acetyl-CoA carboxylase is a heterohexamer composed of biotin carboxyl carrier protein (AccB), biotin carboxylase (AccC) and two subunits each of ACCase subunit alpha (AccA) and ACCase subunit beta (AccD).

The protein resides in the cytoplasm. The catalysed reaction is N(6)-carboxybiotinyl-L-lysyl-[protein] + acetyl-CoA = N(6)-biotinyl-L-lysyl-[protein] + malonyl-CoA. The protein operates within lipid metabolism; malonyl-CoA biosynthesis; malonyl-CoA from acetyl-CoA: step 1/1. Its function is as follows. Component of the acetyl coenzyme A carboxylase (ACC) complex. First, biotin carboxylase catalyzes the carboxylation of biotin on its carrier protein (BCCP) and then the CO(2) group is transferred by the carboxyltransferase to acetyl-CoA to form malonyl-CoA. The polypeptide is Acetyl-coenzyme A carboxylase carboxyl transferase subunit alpha (Streptococcus equi subsp. zooepidemicus (strain MGCS10565)).